Consider the following 390-residue polypeptide: MNIHEFQAKEILKRYGVNVAKGAVAENLEQASEILNDLEGEIFALKAQIHAGGRGLAGGVKIASSREQAIQFASKLLGMTLITPQTPKNGILVRKIYIEEGLNFKQEIYLSLAFDRNSEKISLIVSKDGGVSIEETAKQNPHLIKTISIDPQIGLCGFHTKELINFLQIDKILWSKLDTLLQNLYKIYIFKDANLIEINPLVLTQDDEFYALDAKMSFDDSALFRHEDIRALNDETQTDTSENEAKAQRLNYIKLEGSVGCVVNGAGLAMATMDIIKELGGEAANFLDVGGAATGEGVAKAFRLILNDRRVKVIFVNIFGGIVRCDRIAAGIIEACQSTPLGVPVVVRLDGTNAKEALDMLKNSALKGLHTSDDLFEGARLAVMLAKGEK.

In terms of domain architecture, ATP-grasp spans 9 to 244 (KEILKRYGVN…ETQTDTSENE (236 aa)). Residues Lys46, 53-55 (GRG), Glu99, Leu102, and Glu107 each bind ATP. Asn199 and Asp213 together coordinate Mg(2+). Residues Asn264 and 321 to 323 (GIV) each bind substrate.

It belongs to the succinate/malate CoA ligase beta subunit family. In terms of assembly, heterotetramer of two alpha and two beta subunits. It depends on Mg(2+) as a cofactor.

It carries out the reaction succinate + ATP + CoA = succinyl-CoA + ADP + phosphate. The enzyme catalyses GTP + succinate + CoA = succinyl-CoA + GDP + phosphate. It participates in carbohydrate metabolism; tricarboxylic acid cycle; succinate from succinyl-CoA (ligase route): step 1/1. In terms of biological role, succinyl-CoA synthetase functions in the citric acid cycle (TCA), coupling the hydrolysis of succinyl-CoA to the synthesis of either ATP or GTP and thus represents the only step of substrate-level phosphorylation in the TCA. The beta subunit provides nucleotide specificity of the enzyme and binds the substrate succinate, while the binding sites for coenzyme A and phosphate are found in the alpha subunit. The sequence is that of Succinate--CoA ligase [ADP-forming] subunit beta from Campylobacter curvus (strain 525.92).